The following is a 478-amino-acid chain: Hemolysin secretion protein D, plasmid (478 aa).

The Cytoplasmic portion of the chain corresponds to 1-59 (MKTWLMGFSEFLLRYKLVWSETWKIRKQLDTPVREKDENEFLPAHLELIETPVSRRPRL). The helical; Signal-anchor for type II membrane protein transmembrane segment at 60–80 (VAYFIMGFLVIAFILSVLGQV) threads the bilayer. Topologically, residues 81-478 (EIVATANGKL…ESVTESLRER (398 aa)) are periplasmic.

The protein belongs to the membrane fusion protein (MFP) (TC 8.A.1) family.

It localises to the cell inner membrane. In terms of biological role, involved in the transport of hemolysin A. The chain is Hemolysin secretion protein D, plasmid (hlyD) from Escherichia coli.